The sequence spans 61 residues: UPF0434 protein PSEEN1604 (61 aa).

The protein belongs to the UPF0434 family.

The polypeptide is UPF0434 protein PSEEN1604 (Pseudomonas entomophila (strain L48)).